Reading from the N-terminus, the 611-residue chain is Alpha-1,2-mannosyltransferase ALG9 (611 aa).

Basic residues predominate over residues 1–10 (MASRRARQRL). Positions 1 to 51 (MASRRARQRLKGGGGGGGGGGDAGPAAEKLEQLGSREAGAEPRPESGNKAG) are disordered. Topologically, residues 1-135 (MASRRARQRL…FHARILQTNK (135 aa)) are lumenal. The segment covering 11 to 23 (KGGGGGGGGGGDA) has biased composition (gly residues). A glycan (N-linked (GlcNAc...) asparagine) is linked at N77. The helical transmembrane segment at 136–156 (ILVFYFLRCLLAFVSCVCELY) threads the bilayer. Residues 157-171 (FYKAVCKKFGLHVSR) lie on the Cytoplasmic side of the membrane. A helical membrane pass occupies residues 172–192 (MMLAFLVLSTGMFCSSSAFLP). At 193-213 (SSFCMYTTLIAMTGWYMDKTP) the chain is on the lumenal side. A helical membrane pass occupies residues 214–234 (IAVLGVAAGAILGWPFSAALG). At 235 to 249 (LPIAFDLLARKHRWK) the chain is on the cytoplasmic side. A helical membrane pass occupies residues 250–270 (SFLLWSLVALALFLVPVVVID). Topologically, residues 271–310 (SYYYGKLVVAPLNIVLYNVFTSHGPDLYGTEPWYFYLING) are lumenal. Residues 311-331 (FLNFNVAFALALLVLPLTFLM) form a helical membrane-spanning segment. Residues 332–342 (EYLLQRFHVQN) lie on the Cytoplasmic side of the membrane. The chain crosses the membrane as a helical span at residues 343–363 (LGHPYWLTLAPMYIWFIIFFI). Residues 364–370 (QPHKEER) are Lumenal-facing. Residues 371-391 (FLFPVYPLICLCGAVALSALQ) form a helical membrane-spanning segment. At 392–405 (KCYHFVFQRYRLEH) the chain is on the cytoplasmic side. The chain crosses the membrane as a helical span at residues 406 to 426 (YTVTSNWLALGTVFLFGLLSF). Topologically, residues 427 to 611 (SRSVALFRGY…AKPSRKKSGG (185 aa)) are lumenal. 2 N-linked (GlcNAc...) asparagine glycosylation sites follow: N550 and N593.

Belongs to the glycosyltransferase 22 family.

Its subcellular location is the endoplasmic reticulum membrane. It catalyses the reaction an alpha-D-Man-(1-&gt;2)-alpha-D-Man-(1-&gt;2)-alpha-D-Man-(1-&gt;3)-[alpha-D-Man-(1-&gt;3)-alpha-D-Man-(1-&gt;6)]-beta-D-Man-(1-&gt;4)-beta-D-GlcNAc-(1-&gt;4)-alpha-D-GlcNAc-diphospho-di-trans,poly-cis-dolichol + a di-trans,poly-cis-dolichyl beta-D-mannosyl phosphate = an alpha-D-Man-(1-&gt;2)-alpha-D-Man-(1-&gt;2)-alpha-D-Man-(1-&gt;3)-[alpha-D-Man-(1-&gt;2)-alpha-D-Man-(1-&gt;3)-alpha-D-Man-(1-&gt;6)]-beta-D-Man-(1-&gt;4)-beta-D-GlcNAc-(1-&gt;4)-alpha-D-GlcNAc-diphospho-di-trans,poly-cis-dolichol + a di-trans,poly-cis-dolichyl phosphate + H(+). It carries out the reaction an alpha-D-Man-(1-&gt;2)-alpha-D-Man-(1-&gt;2)-alpha-D-Man-(1-&gt;3)-[alpha-D-Man-(1-&gt;2)-alpha-D-Man-(1-&gt;3)-[alpha-D-Man-(1-&gt;6)]-alpha-D-Man-(1-&gt;6)]-beta-D-Man-(1-&gt;4)-beta-D-GlcNAc-(1-&gt;4)-alpha-D-GlcNAc-diphospho-di-trans,poly-cis-dolichol + a di-trans,poly-cis-dolichyl beta-D-mannosyl phosphate = an alpha-D-Man-(1-&gt;2)-alpha-D-Man-(1-&gt;2)-alpha-D-Man-(1-&gt;3)-[alpha-D-Man-(1-&gt;2)-alpha-D-Man-(1-&gt;3)-[alpha-D-Man-(1-&gt;2)-alpha-D-Man-(1-&gt;6)]-alpha-D-Man-(1-&gt;6)]-beta-D-Man-(1-&gt;4)-beta-D-GlcNAc-(1-&gt;4)-alpha-D-GlcNAc-diphospho-di-trans,poly-cis-dolichol + a di-trans,poly-cis-dolichyl phosphate + H(+). It participates in protein modification; protein glycosylation. Functionally, mannosyltransferase that operates in the biosynthetic pathway of dolichol-linked oligosaccharides, the glycan precursors employed in protein asparagine (N)-glycosylation. The assembly of dolichol-linked oligosaccharides begins on the cytosolic side of the endoplasmic reticulum membrane and finishes in its lumen. The sequential addition of sugars to dolichol pyrophosphate produces dolichol-linked oligosaccharides containing fourteen sugars, including two GlcNAcs, nine mannoses and three glucoses. Once assembled, the oligosaccharide is transferred from the lipid to nascent proteins by oligosaccharyltransferases. In the lumen of the endoplasmic reticulum, catalyzes the addition of the seventh and ninth alpha-1,2-linked mannose residues to Man(6)GlcNAc(2)-PP-dolichol and Man(8)GlcNAc(2)-PP-dolichol respectively. This chain is Alpha-1,2-mannosyltransferase ALG9, found in Mus musculus (Mouse).